A 375-amino-acid chain; its full sequence is Erythronate-4-phosphate dehydrogenase (375 aa).

Ser45 and Thr66 together coordinate substrate. Residues Asp146 and Thr175 each coordinate NAD(+). Arg208 is a catalytic residue. Asp232 lines the NAD(+) pocket. The active site involves Glu237. His254 acts as the Proton donor in catalysis. Gly257 lines the NAD(+) pocket. Tyr258 contributes to the substrate binding site.

Belongs to the D-isomer specific 2-hydroxyacid dehydrogenase family. PdxB subfamily. Homodimer.

It localises to the cytoplasm. The catalysed reaction is 4-phospho-D-erythronate + NAD(+) = (R)-3-hydroxy-2-oxo-4-phosphooxybutanoate + NADH + H(+). The protein operates within cofactor biosynthesis; pyridoxine 5'-phosphate biosynthesis; pyridoxine 5'-phosphate from D-erythrose 4-phosphate: step 2/5. Functionally, catalyzes the oxidation of erythronate-4-phosphate to 3-hydroxy-2-oxo-4-phosphonooxybutanoate. This chain is Erythronate-4-phosphate dehydrogenase, found in Edwardsiella ictaluri (strain 93-146).